Reading from the N-terminus, the 111-residue chain is Phosphoribosyl-ATP pyrophosphatase (111 aa).

The protein belongs to the PRA-PH family.

It localises to the cytoplasm. It catalyses the reaction 1-(5-phospho-beta-D-ribosyl)-ATP + H2O = 1-(5-phospho-beta-D-ribosyl)-5'-AMP + diphosphate + H(+). It participates in amino-acid biosynthesis; L-histidine biosynthesis; L-histidine from 5-phospho-alpha-D-ribose 1-diphosphate: step 2/9. In Pseudomonas putida (strain GB-1), this protein is Phosphoribosyl-ATP pyrophosphatase.